The sequence spans 161 residues: S-ribosylhomocysteine lyase (161 aa).

Fe cation is bound by residues H53, H57, and C124.

This sequence belongs to the LuxS family. As to quaternary structure, homodimer. The cofactor is Fe cation.

It catalyses the reaction S-(5-deoxy-D-ribos-5-yl)-L-homocysteine = (S)-4,5-dihydroxypentane-2,3-dione + L-homocysteine. In terms of biological role, involved in the synthesis of autoinducer 2 (AI-2) which is secreted by bacteria and is used to communicate both the cell density and the metabolic potential of the environment. The regulation of gene expression in response to changes in cell density is called quorum sensing. Catalyzes the transformation of S-ribosylhomocysteine (RHC) to homocysteine (HC) and 4,5-dihydroxy-2,3-pentadione (DPD). This is S-ribosylhomocysteine lyase from Phocaeicola vulgatus (strain ATCC 8482 / DSM 1447 / JCM 5826 / CCUG 4940 / NBRC 14291 / NCTC 11154) (Bacteroides vulgatus).